Reading from the N-terminus, the 272-residue chain is NH(3)-dependent NAD(+) synthetase (272 aa).

43–50 (GLSGGQDS) contacts ATP. Residue D49 participates in Mg(2+) binding. R138 contributes to the deamido-NAD(+) binding site. T158 is an ATP binding site. E163 is a Mg(2+) binding site. 2 residues coordinate deamido-NAD(+): K171 and D178. ATP is bound by residues K187 and T209. A deamido-NAD(+)-binding site is contributed by 258–259 (HK).

This sequence belongs to the NAD synthetase family. As to quaternary structure, homodimer.

The catalysed reaction is deamido-NAD(+) + NH4(+) + ATP = AMP + diphosphate + NAD(+) + H(+). The protein operates within cofactor biosynthesis; NAD(+) biosynthesis; NAD(+) from deamido-NAD(+) (ammonia route): step 1/1. In terms of biological role, catalyzes the ATP-dependent amidation of deamido-NAD to form NAD. Uses ammonia as a nitrogen source. The protein is NH(3)-dependent NAD(+) synthetase of Halalkalibacterium halodurans (strain ATCC BAA-125 / DSM 18197 / FERM 7344 / JCM 9153 / C-125) (Bacillus halodurans).